Here is a 245-residue protein sequence, read N- to C-terminus: Mannose/glucose-specific lectin (245 aa).

Residues D87 and G107 each contribute to the a carbohydrate site. N119 carries N-linked (GlcNAc...) asparagine glycosylation. Mn(2+) contacts are provided by E129 and D131. 2 residues coordinate Ca(2+): D131 and F133. S138 and N139 together coordinate a carbohydrate. The Ca(2+) site is built by N139 and D142. Mn(2+)-binding residues include D142 and H147. G221, E222, and Q223 together coordinate a carbohydrate.

Belongs to the leguminous lectin family. Homodimer.

Its function is as follows. Mannose/glucose-specific lectin that also binds derivatives N-acetyl-D-glucosamine and alpha-methyl-D-mannopyranoside with even higher affinity. Has hemagglutinating activity towards rabbit erythrocytes. Is toxic towards brine shrimp A.nauplii. In rats, induces dose-dependent paw edema. In Centrolobium tomentosum (Arariba), this protein is Mannose/glucose-specific lectin.